The chain runs to 296 residues: Glycine--tRNA ligase alpha subunit (296 aa).

The protein belongs to the class-II aminoacyl-tRNA synthetase family. Tetramer of two alpha and two beta subunits.

The protein localises to the cytoplasm. The enzyme catalyses tRNA(Gly) + glycine + ATP = glycyl-tRNA(Gly) + AMP + diphosphate. The polypeptide is Glycine--tRNA ligase alpha subunit (Francisella tularensis subsp. holarctica (strain FTNF002-00 / FTA)).